The following is a 226-amino-acid chain: ATP synthase F(0) complex subunit a (226 aa).

The next 6 membrane-spanning stretches (helical) occupy residues 9-29 (FITP…FPAM), 68-88 (WALM…LGLV), 97-117 (QLSM…ITGF), 138-158 (IPML…ALAI), 164-184 (ITAG…LTSI), and 201-223 (ILEF…LYLH).

This sequence belongs to the ATPase A chain family. In terms of assembly, component of the ATP synthase complex composed at least of ATP5F1A/subunit alpha, ATP5F1B/subunit beta, ATP5MC1/subunit c (homooctomer), MT-ATP6/subunit a, MT-ATP8/subunit 8, ATP5ME/subunit e, ATP5MF/subunit f, ATP5MG/subunit g, ATP5MK/subunit k, ATP5MJ/subunit j, ATP5F1C/subunit gamma, ATP5F1D/subunit delta, ATP5F1E/subunit epsilon, ATP5PF/subunit F6, ATP5PB/subunit b, ATP5PD/subunit d, ATP5PO/subunit OSCP. ATP synthase complex consists of a soluble F(1) head domain (subunits alpha(3) and beta(3)) - the catalytic core - and a membrane F(0) domain - the membrane proton channel (subunits c, a, 8, e, f, g, k and j). These two domains are linked by a central stalk (subunits gamma, delta, and epsilon) rotating inside the F1 region and a stationary peripheral stalk (subunits F6, b, d, and OSCP). Interacts with DNAJC30; interaction is direct.

Its subcellular location is the mitochondrion inner membrane. The catalysed reaction is H(+)(in) = H(+)(out). Subunit a, of the mitochondrial membrane ATP synthase complex (F(1)F(0) ATP synthase or Complex V) that produces ATP from ADP in the presence of a proton gradient across the membrane which is generated by electron transport complexes of the respiratory chain. ATP synthase complex consist of a soluble F(1) head domain - the catalytic core - and a membrane F(1) domain - the membrane proton channel. These two domains are linked by a central stalk rotating inside the F(1) region and a stationary peripheral stalk. During catalysis, ATP synthesis in the catalytic domain of F(1) is coupled via a rotary mechanism of the central stalk subunits to proton translocation. With the subunit c (ATP5MC1), forms the proton-conducting channel in the F(0) domain, that contains two crucial half-channels (inlet and outlet) that facilitate proton movement from the mitochondrial intermembrane space (IMS) into the matrix. Protons are taken up via the inlet half-channel and released through the outlet half-channel, following a Grotthuss mechanism. This chain is ATP synthase F(0) complex subunit a, found in Dugong dugon (Dugong).